The following is a 203-amino-acid chain: Glycerol-3-phosphate acyltransferase (203 aa).

The next 6 membrane-spanning stretches (helical) occupy residues 3–23 (ILLA…VVVS), 51–71 (KAAI…VWLV), 74–94 (FGIG…LGHL), 116–136 (AVHP…AFFF), 140–160 (SLAA…LFGT), and 164–178 (PVAW…LLIW).

This sequence belongs to the PlsY family. Probably interacts with PlsX.

Its subcellular location is the cell inner membrane. It carries out the reaction an acyl phosphate + sn-glycerol 3-phosphate = a 1-acyl-sn-glycero-3-phosphate + phosphate. The protein operates within lipid metabolism; phospholipid metabolism. Functionally, catalyzes the transfer of an acyl group from acyl-phosphate (acyl-PO(4)) to glycerol-3-phosphate (G3P) to form lysophosphatidic acid (LPA). This enzyme utilizes acyl-phosphate as fatty acyl donor, but not acyl-CoA or acyl-ACP. The chain is Glycerol-3-phosphate acyltransferase from Burkholderia pseudomallei (strain K96243).